A 311-amino-acid chain; its full sequence is MSQQLPDVQATEPDVSVGLSEVGVTGVEKLVEIAREDDRPIVLMAEFEVYVDLPRGRKGIDMSRNMRVIDETLEDAVREPIYRVEEMCGEVAERLLEKHDYTTTATVEMNAELMLREETPASDLPTQGTIDIIASATAQEDAPTREEIGARVVGMTVCPCSQQMMSETARRKLAELGVGEDAVREFLRDVPQAGHSQRGHATLTVEAGGDPDVNLMDLVSVARDSMSARIYNTAKRPDEDHMTYESHANAKFVEDCVRSMARGVVEEFDHLPEDAVVTMKQSNDESIHQHNAHAERVAEFGQLREEVGSGE.

It belongs to the GTP cyclohydrolase IV family. As to quaternary structure, homodimer. The cofactor is Fe(2+).

It catalyses the reaction GTP + H2O = 7,8-dihydroneopterin 2',3'-cyclic phosphate + formate + diphosphate + H(+). It participates in cofactor biosynthesis; 5,6,7,8-tetrahydromethanopterin biosynthesis. Functionally, converts GTP to 7,8-dihydro-D-neopterin 2',3'-cyclic phosphate, the first intermediate in the biosynthesis of coenzyme methanopterin. The chain is GTP cyclohydrolase MptA from Halobacterium salinarum (strain ATCC 29341 / DSM 671 / R1).